The chain runs to 383 residues: Adaptive-response sensory kinase SasA (383 aa).

One can recognise a Histidine kinase domain in the interval 152–365 (MVAHELRTPL…CFTFTVPIWQ (214 aa)). A Phosphohistidine; by autocatalysis modification is found at H155.

In terms of assembly, homooligomerizes. Interacts with KaiC. Participates in the KaiABC clock complex, whose core is composed of a KaiC homohexamer, 6 KaiB and up to 6 KaiA dimers. SasA and KaiB(fs) compete to bind to KaiC.

The enzyme catalyses ATP + protein L-histidine = ADP + protein N-phospho-L-histidine.. Functionally, member of the two-component regulatory system SasA/RpaA involved in genome-wide circadian gene expression. One of several clock output pathways. Participates in the Kai clock protein complex, the main circadian regulator in cyanobacteria, via its interaction with KaiC. KaiC enhances the autophosphorylation activity of SasA, which then transfers its phosphate group to RpaA to activate it. In addition to its output function, recruits fold-shifted KaiB (KaiB(fs)) to KaiC to cooperatively form the KaiB(6):KaiC(6) complex (independent of SasA kinase activity). Required for robustness of the circadian rhythm of gene expression and is involved in clock output, also required for adaptation to light/dark cycles. The protein is Adaptive-response sensory kinase SasA of Parasynechococcus marenigrum (strain WH8102).